We begin with the raw amino-acid sequence, 441 residues long: Histidinol dehydrogenase (441 aa).

Residues Y136, Q197, and N220 each contribute to the NAD(+) site. Residues S243, Q265, and H268 each contribute to the substrate site. Zn(2+) contacts are provided by Q265 and H268. Residues E333 and H334 each act as proton acceptor in the active site. Substrate-binding residues include H334, D367, E421, and H426. Residue D367 participates in Zn(2+) binding. H426 serves as a coordination point for Zn(2+).

The protein belongs to the histidinol dehydrogenase family. Zn(2+) is required as a cofactor.

The catalysed reaction is L-histidinol + 2 NAD(+) + H2O = L-histidine + 2 NADH + 3 H(+). It functions in the pathway amino-acid biosynthesis; L-histidine biosynthesis; L-histidine from 5-phospho-alpha-D-ribose 1-diphosphate: step 9/9. Functionally, catalyzes the sequential NAD-dependent oxidations of L-histidinol to L-histidinaldehyde and then to L-histidine. In Pseudomonas putida (strain ATCC 47054 / DSM 6125 / CFBP 8728 / NCIMB 11950 / KT2440), this protein is Histidinol dehydrogenase.